The sequence spans 250 residues: Orotidine 5'-phosphate decarboxylase (250 aa).

Residues Asp9, Lys40, 67 to 76 (DLKFHDIPNT), Thr132, Arg190, Gln204, Gly224, and Arg225 contribute to the substrate site. The active-site Proton donor is Lys69.

Belongs to the OMP decarboxylase family. Type 1 subfamily. In terms of assembly, homodimer.

It catalyses the reaction orotidine 5'-phosphate + H(+) = UMP + CO2. The protein operates within pyrimidine metabolism; UMP biosynthesis via de novo pathway; UMP from orotate: step 2/2. Catalyzes the decarboxylation of orotidine 5'-monophosphate (OMP) to uridine 5'-monophosphate (UMP). This Nitratidesulfovibrio vulgaris (strain DSM 19637 / Miyazaki F) (Desulfovibrio vulgaris) protein is Orotidine 5'-phosphate decarboxylase.